A 373-amino-acid chain; its full sequence is Inhibitor of nuclear factor kappa-B kinase-interacting protein (373 aa).

Residues 1–11 are compositionally biased toward basic residues; that stretch reads MSEVKSRKKPG. The interval 1–38 is disordered; that stretch reads MSEVKSRKKPGPKVAAPEPEKRSDGRKNPEARGDAGWA. Over residues 18–33 the composition is skewed to basic and acidic residues; that stretch reads EPEKRSDGRKNPEARG. Residues 43–59 traverse the membrane as a helical segment; the sequence is GLSLLSLAMTLGLAWLV. Coiled-coil stretches lie at residues 86-257 and 285-324; these read LQSK…NKLS and QDLIGTERKMEELTMQMFNMEDDMLRAVSEIMEMQKTLEG. N-linked (GlcNAc...) asparagine glycosylation is present at N151.

N-glycosylated at Asn-151.

It is found in the endoplasmic reticulum membrane. Functionally, target of p53/TP53 with pro-apoptotic function. This Mus musculus (Mouse) protein is Inhibitor of nuclear factor kappa-B kinase-interacting protein (Ikbip).